The sequence spans 138 residues: Acidic phospholipase A2 2 (138 aa).

The signal sequence occupies residues 1-16 (MRTLWIVAVLLLGVEG). Cystine bridges form between cysteine 42-cysteine 131, cysteine 44-cysteine 60, cysteine 59-cysteine 111, cysteine 65-cysteine 138, cysteine 66-cysteine 104, cysteine 73-cysteine 97, and cysteine 91-cysteine 102. Ca(2+) is bound by residues tyrosine 43, glycine 45, and glycine 47. The active site involves histidine 63. Aspartate 64 serves as a coordination point for Ca(2+). The active site involves aspartate 105.

Belongs to the phospholipase A2 family. Group II subfamily. D49 sub-subfamily. Ca(2+) serves as cofactor. As to expression, expressed by the venom gland.

The protein resides in the secreted. The enzyme catalyses a 1,2-diacyl-sn-glycero-3-phosphocholine + H2O = a 1-acyl-sn-glycero-3-phosphocholine + a fatty acid + H(+). In terms of biological role, snake venom phospholipase A2 (PLA2) that displays edema-inducing activities, exhibits indirect hemolytic activity, and inhibits ADP-induced platelet aggregation. PLA2 catalyzes the calcium-dependent hydrolysis of the 2-acyl groups in 3-sn-phosphoglycerides. This chain is Acidic phospholipase A2 2, found in Protobothrops mucrosquamatus (Taiwan habu).